A 504-amino-acid polypeptide reads, in one-letter code: WD repeat-containing protein 55 homolog (504 aa).

Over residues 32-49 (QEVVNESDSEIGEYDLGD) the composition is skewed to acidic residues. The segment at 32–135 (QEVVNESDSE…NAFDMDEDDE (104 aa)) is disordered. The span at 66–76 (DSISSDGSFNP) shows a compositional bias: polar residues. Acidic residues predominate over residues 77–95 (NDEDSDTDSDDSMLDEPDE). Polar residues predominate over residues 114-124 (SGSSNRNQDSD). WD repeat units lie at residues 158–197 (KLED…NKLL), 202–241 (VHAK…LKKL), 245–283 (AHDD…SIFE), 286–325 (EIED…LYVQ), 328–367 (PYEE…YHCD), and 412–451 (QHNM…DFGD). The segment at 484-504 (AKEDNNDNENDDATAGPSNTT) is disordered.

This sequence belongs to the WD repeat WDR55 family.

In Drosophila willistoni (Fruit fly), this protein is WD repeat-containing protein 55 homolog.